Consider the following 243-residue polypeptide: UPF0758 protein sll0766 (243 aa).

Residues 113–235 (VVDSPEAAAI…HQSLRQCTDL (123 aa)) form the MPN domain. Residues histidine 184, histidine 186, and aspartate 197 each contribute to the Zn(2+) site. Residues 184-197 (HNHPSGGLEPSPED) carry the JAMM motif motif.

This sequence belongs to the UPF0758 family.

The protein is UPF0758 protein sll0766 of Synechocystis sp. (strain ATCC 27184 / PCC 6803 / Kazusa).